The primary structure comprises 210 residues: Large ribosomal subunit protein bL25 (210 aa).

Positions 185 to 210 are disordered; that stretch reads APEPAGQPEVPPEPAEEAKAKTIEKE. Residues 200-210 are compositionally biased toward basic and acidic residues; the sequence is EEAKAKTIEKE.

The protein belongs to the bacterial ribosomal protein bL25 family. CTC subfamily. In terms of assembly, part of the 50S ribosomal subunit; part of the 5S rRNA/L5/L18/L25 subcomplex. Contacts the 5S rRNA. Binds to the 5S rRNA independently of L5 and L18.

Its function is as follows. This is one of the proteins that binds to the 5S RNA in the ribosome where it forms part of the central protuberance. This is Large ribosomal subunit protein bL25 from Desulforamulus reducens (strain ATCC BAA-1160 / DSM 100696 / MI-1) (Desulfotomaculum reducens).